The sequence spans 696 residues: MEASVILPILKKKLAFLSGGKDRRSGLILTIPLCLEQTNMDELSVTLDYLLSIPSEKCKARGFTVIVDGRKSQWNVVKTVVVMLQNVVPAEVSLVCVVKPDEFWDKKVTHFCFWKEKDRLGFEVILVSANKLTRYIEPCQLTEDFGGSLTYDHMDWLNKRLVFEKFTKESTSLLDELALINNGSDKGNQQEKERSVDLNFLPSVDPETVLQTGHELLSELQQRRFNGSDGGVSWSPMDDELLAQPQVMKLLDSLREQYTRYQEVCRQRSKRTQLEEIQQKVMQVVNWLEGPGSEQLRAQWGIGDSIRASQALQQKHEEIESQHSEWFAVYVELNQQIAALLNAGDEEDLVELKSLQQQLSDVCYRQASQLEFRQNLLQAALEFHGVAQDLSQQLDGLLGMLCVDVAPADGASIQQTLKLLEEKLKSVDVGLQGLREKGQGLLDQISNQASWAYGKDVTIENKENVDHIQGVMEDMQLRKQRCEDMVDVRRLKMLQMVQLFKCEEDAAQAVEWLSELLDALLKTHIRLGDDAQETKVLLEKHRKFVDVAQSTYDYGRQLLQATVVLCQSLRCTSRSSGDTLPRLNRVWKQFTIASEERVHRLEMAIAFHSNAEKILQDCPEEPEAINDEEQFDEIEAVGKSLLDRLTVPVVYPDGTEQYFGSPSDMASTAENIRDRMKLVNLKRQQLRHPEMVTTES.

Residues 1-153 (MEASVILPIL…DFGGSLTYDH (153 aa)) form the CRAL-TRIO domain. Spectrin repeat units lie at residues 275–378 (EEIQ…NLLQ), 381–494 (LEFH…LKML), and 500–602 (FKCE…HRLE).

The protein belongs to the SOLO family. Interacts (via the spectrin 1 repeat) with TRPC4 and TRPC5 (via CIRB domain). Interacts with CTNNB1. Broad expression. High expression in thalamus and brain. Significantly expressed in vasculature.

May act as the primary docking protein directing membrane turnover and assembly of the transient receptor potential channels TRPC4 and TRPC5. Binds phospholipids such as phosphatidylinositol monophosphates, phosphatidylinositol diphosphates (PIP2s) and phosphatidic acid, but not less polar lipids including phosphatidylcholine, phosphatidylserine, and phosphatidylinositol. The binding to PIP2s is calcium dependent. Might be involved in the plasma membrane localization of CTNNB1. This is SEC14 domain and spectrin repeat-containing protein 1 (SESTD1) from Homo sapiens (Human).